The chain runs to 567 residues: MSKQIQIPDIGSDEVTVTEVMVNVGDTISVDQSIINVEGDKASMEVPAPEAGVVKEILVKVGDKVSTGTPMLVLEAAGAAPAADEPTAPVADAPTAPVVATAPTASAIVEVNVPDIGGDEVNVTEIMVAVGDTITEEQSLITVEGDKASMEVPAPFGGVVKEILVKSGDKVSTGSLIMRFEVLGAAPAESASAPASTSAPQTAAPATTAQAPQAAAPDTTAQAPQAAAPDTTAQAAQSNNNVSGLSQEQVEASTGYAHATPVIRRLAREFGVNLDKVKGTGRKGRIVKEDIEAYVKTAVKAYESGATAQATGNGVANGAGLGLLPWPKVDFSKFGEIEEVELSRINKISGANLHRNWVIIPHVTHFDKADITDLEAFRKEQNALREKQKLGVKITPVVFIMKAVAKALEAYPRFNSSITEDAQRLILKKYINIGVAVDTPNGLVVPVFKNVNKKGIIELSRELMEVSKKAREGKLTASDMQGGCFTISSLGGIGTTHFAPIVNAPEVAILGVSKSSMEPVWNGKEFAPRLILPMSLSFDHRVIDGADGARFISYLGSVLADLRRLVM.

Lipoyl-binding domains lie at 2 to 75 and 108 to 181; these read SKQI…LVLE and IVEV…MRFE. An N6-lipoyllysine mark is found at lysine 41 and lysine 147. A compositionally biased stretch (low complexity) spans 192–238; the sequence is SAPASTSAPQTAAPATTAQAPQAAAPDTTAQAPQAAAPDTTAQAAQS. The disordered stretch occupies residues 192 to 249; it reads SAPASTSAPQTAAPATTAQAPQAAAPDTTAQAPQAAAPDTTAQAAQSNNNVSGLSQEQ. Polar residues predominate over residues 239–249; sequence NNNVSGLSQEQ. The region spanning 258 to 295 is the Peripheral subunit-binding (PSBD) domain; the sequence is HATPVIRRLAREFGVNLDKVKGTGRKGRIVKEDIEAYV. Active-site residues include cysteine 484, histidine 540, and aspartate 544.

The protein belongs to the 2-oxoacid dehydrogenase family. In terms of assembly, forms a 24-polypeptide structural core with octahedral symmetry. It depends on (R)-lipoate as a cofactor.

The enzyme catalyses N(6)-[(R)-dihydrolipoyl]-L-lysyl-[protein] + acetyl-CoA = N(6)-[(R)-S(8)-acetyldihydrolipoyl]-L-lysyl-[protein] + CoA. Its function is as follows. The pyruvate dehydrogenase complex catalyzes the overall conversion of pyruvate to acetyl-CoA and CO(2). It contains multiple copies of three enzymatic components: pyruvate dehydrogenase (E1), dihydrolipoamide acetyltransferase (E2) and lipoamide dehydrogenase (E3). The sequence is that of Dihydrolipoyllysine-residue acetyltransferase component of pyruvate dehydrogenase complex (aceF) from Haemophilus influenzae (strain ATCC 51907 / DSM 11121 / KW20 / Rd).